Reading from the N-terminus, the 155-residue chain is SsrA-binding protein (155 aa).

Belongs to the SmpB family.

Its subcellular location is the cytoplasm. In terms of biological role, required for rescue of stalled ribosomes mediated by trans-translation. Binds to transfer-messenger RNA (tmRNA), required for stable association of tmRNA with ribosomes. tmRNA and SmpB together mimic tRNA shape, replacing the anticodon stem-loop with SmpB. tmRNA is encoded by the ssrA gene; the 2 termini fold to resemble tRNA(Ala) and it encodes a 'tag peptide', a short internal open reading frame. During trans-translation Ala-aminoacylated tmRNA acts like a tRNA, entering the A-site of stalled ribosomes, displacing the stalled mRNA. The ribosome then switches to translate the ORF on the tmRNA; the nascent peptide is terminated with the 'tag peptide' encoded by the tmRNA and targeted for degradation. The ribosome is freed to recommence translation, which seems to be the essential function of trans-translation. This is SsrA-binding protein from Streptococcus sanguinis (strain SK36).